The sequence spans 99 residues: Cell division protein FtsB (99 aa).

At 1-3 the chain is on the cytoplasmic side; it reads MRV. A helical membrane pass occupies residues 4–21; it reads FTAILLILLVLLQYRLWF. The Periplasmic segment spans residues 22–99; the sequence is GKNSVPDYLV…KENSTRNVNN (78 aa). Positions 29–53 form a coiled coil; the sequence is YLVLKENVVRQQSANEKLQQRNKLL.

It belongs to the FtsB family. Part of a complex composed of FtsB, FtsL and FtsQ.

The protein resides in the cell inner membrane. Functionally, essential cell division protein. May link together the upstream cell division proteins, which are predominantly cytoplasmic, with the downstream cell division proteins, which are predominantly periplasmic. The polypeptide is Cell division protein FtsB (Colwellia psychrerythraea (strain 34H / ATCC BAA-681) (Vibrio psychroerythus)).